A 259-amino-acid polypeptide reads, in one-letter code: Phosphatidylglycerol--prolipoprotein diacylglyceryl transferase (259 aa).

The next 4 helical transmembrane spans lie at 10–30 (IGLL…LFAY), 50–70 (IISW…ILFY), 86–106 (WKGG…MYIF), and 112–132 (IKFL…IFLG). Arg133 contacts a 1,2-diacyl-sn-glycero-3-phospho-(1'-sn-glycerol). A run of 3 helical transmembrane segments spans residues 169–189 (LYEA…LFFF), 197–217 (GMLF…IEFV), and 227–247 (ILFN…ILGI).

It belongs to the Lgt family.

It is found in the cell inner membrane. The catalysed reaction is L-cysteinyl-[prolipoprotein] + a 1,2-diacyl-sn-glycero-3-phospho-(1'-sn-glycerol) = an S-1,2-diacyl-sn-glyceryl-L-cysteinyl-[prolipoprotein] + sn-glycerol 1-phosphate + H(+). It participates in protein modification; lipoprotein biosynthesis (diacylglyceryl transfer). Catalyzes the transfer of the diacylglyceryl group from phosphatidylglycerol to the sulfhydryl group of the N-terminal cysteine of a prolipoprotein, the first step in the formation of mature lipoproteins. The sequence is that of Phosphatidylglycerol--prolipoprotein diacylglyceryl transferase from Ehrlichia ruminantium (strain Welgevonden).